A 1383-amino-acid polypeptide reads, in one-letter code: PAS domain-containing serine/threonine-protein kinase (1383 aa).

Met-1 bears the N-acetylmethionine mark. Ser-19 is subject to Phosphoserine. A Phosphothreonine modification is found at Thr-31. PAS domains lie at 117 to 188 (SGSL…VEAD) and 333 to 400 (YQAS…SVQL). Residue Ser-1000 is modified to Phosphoserine. Residues 1059–1311 (YNTISPLGSG…LEKLIRDPWV (253 aa)) enclose the Protein kinase domain. ATP contacts are provided by residues 1065–1073 (LGSGAFGFV), Lys-1088, and 1142–1149 (EKHGSGMD). The active-site Proton acceptor is the Asp-1188. An ATP-binding site is contributed by Asp-1206. Phosphothreonine; by autocatalysis is present on residues Thr-1221 and Thr-1225. A disordered region spans residues 1344–1383 (GSRSPSEMAQREGLCGPPAPRETRGDQHCLHLKDPSLPVS). Over residues 1364–1377 (RETRGDQHCLHLKD) the composition is skewed to basic and acidic residues.

The protein belongs to the protein kinase superfamily. CAMK Ser/Thr protein kinase family. Autophosphorylated on Thr-1221 and Thr-1225. Autophosphorylation is activated by phospholipids. Ubiquitously expressed. Strongly up-regulated in postmeiotic germ cells during spermatogenesis.

Its subcellular location is the cytoplasm. It localises to the nucleus. It carries out the reaction L-seryl-[protein] + ATP = O-phospho-L-seryl-[protein] + ADP + H(+). The enzyme catalyses L-threonyl-[protein] + ATP = O-phospho-L-threonyl-[protein] + ADP + H(+). Its activity is regulated as follows. Protein kinase activity is inhibited by the first PAS domain: binding of an unidentified ligand desinhibits the protein kinase activity. May be activated by autophosphorylation on Thr-1221 and Thr-1225. Autophosphorylation is enhanced upon phosphatidylinositol monophosphate (phosphatidylinositol 4-phosphate) binding and inhibited upon phosphatidylinositol bi- and tri-phosphate binding. In contrast, phosphorylation of target proteins is inhibited upon all phosphatidylinositol-binding (phosphatidylinositol mono- bi- and tri-phosphate). In terms of biological role, serine/threonine-protein kinase involved in energy homeostasis and protein translation. Phosphorylates EEF1A1, GYS1, PDX1 and RPS6. Probably plays a role under changing environmental conditions (oxygen, glucose, nutrition), rather than under standard conditions. Acts as a sensor involved in energy homeostasis: regulates glycogen synthase synthesis by mediating phosphorylation of GYS1, leading to GYS1 inactivation. May be involved in glucose-stimulated insulin production in pancreas and regulation of glucagon secretion by glucose in alpha cells; however such data require additional evidences. May play a role in regulation of protein translation by phosphorylating EEF1A1, leading to increase translation efficiency. May also participate in respiratory regulation. This Mus musculus (Mouse) protein is PAS domain-containing serine/threonine-protein kinase (Pask).